The chain runs to 258 residues: Granzyme A (258 aa).

Residues 1-26 (MNIPFPFSFPPAICLLLIPGVFPVSC) form the signal peptide. A propeptide spans 27-28 (EG) (activation peptide). The region spanning 29 to 255 (IIGGNEVAPH…HLNWIKKTIA (227 aa)) is the Peptidase S1 domain. The cysteines at positions 52 and 68 are disulfide-linked. Catalysis depends on charge relay system residues His-67 and Asp-112. 3 disulfides stabilise this stretch: Cys-146–Cys-217, Cys-178–Cys-196, and Cys-207–Cys-230. Asn-169 carries an N-linked (GlcNAc...) asparagine glycan. Ser-211 serves as the catalytic Charge relay system.

This sequence belongs to the peptidase S1 family. Granzyme subfamily. As to quaternary structure, homodimer; disulfide-linked. Interacts with APEX1.

Its subcellular location is the secreted. The protein resides in the cytoplasmic granule. The catalysed reaction is Hydrolysis of proteins, including fibronectin, type IV collagen and nucleolin. Preferential cleavage: -Arg-|-Xaa-, -Lys-|-Xaa- &gt;&gt; -Phe-|-Xaa- in small molecule substrates.. In terms of biological role, abundant protease in the cytosolic granules of cytotoxic T-cells and NK-cells which activates caspase-independent pyroptosis when delivered into the target cell through the immunological synapse. It cleaves after Lys or Arg. Cleaves APEX1 after 'Lys-31' and destroys its oxidative repair activity. Cleaves the nucleosome assembly protein SET after 'Lys-189', which disrupts its nucleosome assembly activity and allows the SET complex to translocate into the nucleus to nick and degrade the DNA. This Bos taurus (Bovine) protein is Granzyme A (GZMA).